The sequence spans 252 residues: Putative cytosolic acyl coenzyme A thioester hydrolase-like (252 aa).

HotDog ACOT-type domains lie at 1–90 (MIKE…LSLT) and 146–252 (SYSQ…SVFT).

As to quaternary structure, homodimer. Expressed in all tissues examined. Up-regulated in nasopharyngeal carcinoma (at protein level).

The protein localises to the cytoplasm. The catalysed reaction is hexadecanoyl-CoA + H2O = hexadecanoate + CoA + H(+). Functionally, acyl-CoA thioesterases are a group of enzymes that catalyze the hydrolysis of acyl-CoAs to the free fatty acid and coenzyme A (CoASH), providing the potential to regulate intracellular levels of acyl-CoAs, free fatty acids and CoASH. This Homo sapiens (Human) protein is Putative cytosolic acyl coenzyme A thioester hydrolase-like (ACOT7L).